A 261-amino-acid polypeptide reads, in one-letter code: Cytochrome c oxidase subunit 3 (261 aa).

Over 1 to 15 (MTHQTHAYHMVNPSP) the chain is Mitochondrial matrix. A helical transmembrane segment spans residues 16–34 (WPLTGALSALLMTSGLIMW). The Mitochondrial intermembrane segment spans residues 35-40 (FHFNSV). The helical transmembrane segment at 41 to 66 (ALLTLGLTTNMLTMYQWWRDVIREST) threads the bilayer. The Mitochondrial matrix segment spans residues 67–72 (FQGHHT). Residues 73–105 (PNVQKGLRYGMILFIISEVLFFTGFFWAFYHSS) traverse the membrane as a helical segment. The Mitochondrial intermembrane portion of the chain corresponds to 106–128 (LAPTPELGGCWPPTGIHPLNPLE). Residues 129 to 152 (VPLLNTSVLLASGVSITWAHHSLM) traverse the membrane as a helical segment. The Mitochondrial matrix segment spans residues 153-155 (EGN). Residues 156-183 (RNHMLQALFITIALGVYFTLLQASEYYE) traverse the membrane as a helical segment. Over 184–190 (APFTISD) the chain is Mitochondrial intermembrane. The helical transmembrane segment at 191 to 223 (GVYGSTFFVATGFHGLHVIIGSTFLIVCFFRQL) threads the bilayer. Over 224-232 (KFHFTSSHH) the chain is Mitochondrial matrix. The chain crosses the membrane as a helical span at residues 233-256 (FGFEAAAWYWHFVDVVWLFLYVSI). Residues 257 to 261 (YWWGS) lie on the Mitochondrial intermembrane side of the membrane.

This sequence belongs to the cytochrome c oxidase subunit 3 family. Component of the cytochrome c oxidase (complex IV, CIV), a multisubunit enzyme composed of 14 subunits. The complex is composed of a catalytic core of 3 subunits MT-CO1, MT-CO2 and MT-CO3, encoded in the mitochondrial DNA, and 11 supernumerary subunits COX4I, COX5A, COX5B, COX6A, COX6B, COX6C, COX7A, COX7B, COX7C, COX8 and NDUFA4, which are encoded in the nuclear genome. The complex exists as a monomer or a dimer and forms supercomplexes (SCs) in the inner mitochondrial membrane with NADH-ubiquinone oxidoreductase (complex I, CI) and ubiquinol-cytochrome c oxidoreductase (cytochrome b-c1 complex, complex III, CIII), resulting in different assemblies (supercomplex SCI(1)III(2)IV(1) and megacomplex MCI(2)III(2)IV(2)).

It is found in the mitochondrion inner membrane. It catalyses the reaction 4 Fe(II)-[cytochrome c] + O2 + 8 H(+)(in) = 4 Fe(III)-[cytochrome c] + 2 H2O + 4 H(+)(out). In terms of biological role, component of the cytochrome c oxidase, the last enzyme in the mitochondrial electron transport chain which drives oxidative phosphorylation. The respiratory chain contains 3 multisubunit complexes succinate dehydrogenase (complex II, CII), ubiquinol-cytochrome c oxidoreductase (cytochrome b-c1 complex, complex III, CIII) and cytochrome c oxidase (complex IV, CIV), that cooperate to transfer electrons derived from NADH and succinate to molecular oxygen, creating an electrochemical gradient over the inner membrane that drives transmembrane transport and the ATP synthase. Cytochrome c oxidase is the component of the respiratory chain that catalyzes the reduction of oxygen to water. Electrons originating from reduced cytochrome c in the intermembrane space (IMS) are transferred via the dinuclear copper A center (CU(A)) of subunit 2 and heme A of subunit 1 to the active site in subunit 1, a binuclear center (BNC) formed by heme A3 and copper B (CU(B)). The BNC reduces molecular oxygen to 2 water molecules using 4 electrons from cytochrome c in the IMS and 4 protons from the mitochondrial matrix. The chain is Cytochrome c oxidase subunit 3 (MT-CO3) from Nanger dama (Dama gazelle).